We begin with the raw amino-acid sequence, 87 residues long: UPF0367 protein Pro_0144 (87 aa).

This sequence belongs to the UPF0367 family.

In Prochlorococcus marinus (strain SARG / CCMP1375 / SS120), this protein is UPF0367 protein Pro_0144.